The primary structure comprises 119 residues: Large ribosomal subunit protein uL14 (119 aa).

Belongs to the universal ribosomal protein uL14 family. As to quaternary structure, part of the 50S ribosomal subunit. Forms a cluster with proteins L3 and L19. In the 70S ribosome, L14 and L19 interact and together make contacts with the 16S rRNA in bridges B5 and B8.

Its function is as follows. Binds to 23S rRNA. Forms part of two intersubunit bridges in the 70S ribosome. This is Large ribosomal subunit protein uL14 from Wolbachia sp. subsp. Brugia malayi (strain TRS).